The chain runs to 100 residues: Urease subunit gamma (100 aa).

The protein belongs to the urease gamma subunit family. As to quaternary structure, heterotrimer of UreA (gamma), UreB (beta) and UreC (alpha) subunits. Three heterotrimers associate to form the active enzyme.

The protein localises to the cytoplasm. It catalyses the reaction urea + 2 H2O + H(+) = hydrogencarbonate + 2 NH4(+). The protein operates within nitrogen metabolism; urea degradation; CO(2) and NH(3) from urea (urease route): step 1/1. This is Urease subunit gamma from Kocuria rhizophila (strain ATCC 9341 / DSM 348 / NBRC 103217 / DC2201).